The sequence spans 241 residues: Polycomb group RING finger protein 3 (241 aa).

The segment at 17-56 (CRLCSGYLIDATTVTECLHTFCRSCLVKYLEENNTCPTCR) adopts an RING-type zinc-finger fold. The segment at 115–148 (AKQHLDPRNGETKADDNSNKETAEEKQEEDNDYH) is disordered. Residues 117-139 (QHLDPRNGETKADDNSNKETAEE) show a composition bias toward basic and acidic residues. An interaction with BCORL1 region spans residues 131 to 241 (NSNKETAEEK…LHYRPKMDLL (111 aa)).

Component of a PRC1-like complex that contains PCGF3, RNF2 and RYBP. Interacts with RNF2. Interacts with CBX6, CBX7 and CBX8. Interacts with BCORL1.

It localises to the nucleus. Its subcellular location is the nucleoplasm. In terms of biological role, component of a Polycomb group (PcG) multiprotein PRC1-like complex, a complex class required to maintain the transcriptionally repressive state of many genes, including Hox genes, throughout development. PcG PRC1 complex acts via chromatin remodeling and modification of histones; it mediates monoubiquitination of histone H2A 'Lys-119', rendering chromatin heritably changed in its expressibility. Within the PRC1-like complex, regulates RNF2 ubiquitin ligase activity. Plays a redundant role with PCGF5 as part of a PRC1-like complex that mediates monoubiquitination of histone H2A 'Lys-119' on the X chromosome and is required for normal silencing of one copy of the X chromosome in XX females. The sequence is that of Polycomb group RING finger protein 3 (PcgF3) from Mus musculus (Mouse).